The sequence spans 266 residues: Bax inhibitor 1 (266 aa).

Residues 1–22 are disordered; the sequence is MPANYQSVPQDDPSVPNLAQAP. 7 helical membrane passes run 70–90, 92–112, 123–143, 147–167, 177–197, 201–221, and 240–260; these read LFVTSLFGGIFYLHPAFSFWV, MHPWFLILNFFISLVVLFGLI, IFLFLFTALEGLTLGTAITFF, IILEAVFITLGVFVALTAFTF, GGFLYVSLWSLILTPLIFFFV, PFIDMAFAGFGTLVFCGYILF, and LMLYLDFINLFIRILQILGML.

This sequence belongs to the BI1 family. LFG subfamily.

The protein localises to the endoplasmic reticulum membrane. It localises to the mitochondrion membrane. It is found in the golgi apparatus membrane. The protein resides in the vacuole membrane. In terms of biological role, links the unfolded protein response and programmed cell death and mediates mitochondrial-dependent apoptosis. Induces cell death and disruption of the mitochondrial transmembrane potential. In Schizosaccharomyces pombe (strain 972 / ATCC 24843) (Fission yeast), this protein is Bax inhibitor 1 (bxi1).